The following is a 303-amino-acid chain: UDP-3-O-acyl-N-acetylglucosamine deacetylase (303 aa).

Zn(2+)-binding residues include H78, H237, and D241. The active-site Proton donor is the H264.

It belongs to the LpxC family. It depends on Zn(2+) as a cofactor.

The catalysed reaction is a UDP-3-O-[(3R)-3-hydroxyacyl]-N-acetyl-alpha-D-glucosamine + H2O = a UDP-3-O-[(3R)-3-hydroxyacyl]-alpha-D-glucosamine + acetate. It functions in the pathway glycolipid biosynthesis; lipid IV(A) biosynthesis; lipid IV(A) from (3R)-3-hydroxytetradecanoyl-[acyl-carrier-protein] and UDP-N-acetyl-alpha-D-glucosamine: step 2/6. Its function is as follows. Catalyzes the hydrolysis of UDP-3-O-myristoyl-N-acetylglucosamine to form UDP-3-O-myristoylglucosamine and acetate, the committed step in lipid A biosynthesis. The chain is UDP-3-O-acyl-N-acetylglucosamine deacetylase from Pseudomonas entomophila (strain L48).